We begin with the raw amino-acid sequence, 171 residues long: Endoribonuclease YbeY (171 aa).

Zn(2+) is bound by residues His-126, His-130, and His-136.

This sequence belongs to the endoribonuclease YbeY family. Requires Zn(2+) as cofactor.

Its subcellular location is the cytoplasm. Single strand-specific metallo-endoribonuclease involved in late-stage 70S ribosome quality control and in maturation of the 3' terminus of the 16S rRNA. The sequence is that of Endoribonuclease YbeY from Rhizobium etli (strain CIAT 652).